The following is a 447-amino-acid chain: Acyl-CoA (8-3)-desaturase (447 aa).

Met-1 carries the post-translational modification N-acetylmethionine. The Cytoplasmic portion of the chain corresponds to 1–124 (MAPDPVPTPG…FRELRATVER (124 aa)). Residues 19-97 (TRYFTWEEVA…MNSLLIGELA (79 aa)) enclose the Cytochrome b5 heme-binding domain. A helical membrane pass occupies residues 125–145 (MGLMKANHLFFLVYLLHILLL). The Lumenal portion of the chain corresponds to 146–160 (DVAAWLTLWIFGTSL). Residues 161–180 (VPFILCAVLLSTVQAQAGWL) form a helical membrane-spanning segment. At 181–268 (QHDFGHLSVF…HMPYNHQHKY (88 aa)) the chain is on the cytoplasmic side. Positions 182–186 (HDFGH) match the Histidine box-1 motif. Positions 219 to 223 (HFQHH) match the Histidine box-2 motif. The helical transmembrane segment at 269-289 (FFLIGPPALLPLYFQWYIFYF) threads the bilayer. Residues 290–308 (VVQRKKWVDLAWMLSFYAR) are Lumenal-facing. The helical transmembrane segment at 309 to 329 (IFFTYMPLLGLKGFLGLFFIV) threads the bilayer. Residues 330-447 (RFLESNWFVW…QLWLDAYLHQ (118 aa)) are Cytoplasmic-facing. The Histidine box-3 motif lies at 385-389 (QIEHH).

The protein belongs to the fatty acid desaturase type 1 family. As to expression, highly expressed in the adrenal gland, liver, brain, and testis, tissues where lipogenesis and steroidogenesis are active. Expressed in colonic mucosa.

It is found in the endoplasmic reticulum membrane. The protein resides in the mitochondrion. The catalysed reaction is (8Z,11Z,14Z)-eicosatrienoyl-CoA + 2 Fe(II)-[cytochrome b5] + O2 + 2 H(+) = (5Z,8Z,11Z,14Z)-eicosatetraenoyl-CoA + 2 Fe(III)-[cytochrome b5] + 2 H2O. It catalyses the reaction (8Z,11Z,14Z,17Z)-eicosatetraenoyl-CoA + 2 Fe(II)-[cytochrome b5] + O2 + 2 H(+) = (5Z,8Z,11Z,14Z,17Z)-eicosapentaenoyl-CoA + 2 Fe(III)-[cytochrome b5] + 2 H2O. It carries out the reaction (11E)-octadecenoyl-CoA + 2 Fe(II)-[cytochrome b5] + O2 + 2 H(+) = (5Z,11E)-octadecadienoyl-CoA + 2 Fe(III)-[cytochrome b5] + 2 H2O. It functions in the pathway lipid metabolism; polyunsaturated fatty acid biosynthesis. Functionally, acts as a front-end fatty acyl-coenzyme A (CoA) desaturase that introduces a cis double bond at carbon 5 located between a preexisting double bond and the carboxyl end of the fatty acyl chain. Involved in biosynthesis of highly unsaturated fatty acids (HUFA) from the essential polyunsaturated fatty acids (PUFA) linoleic acid (LA) (18:2n-6) and alpha-linolenic acid (ALA) (18:3n-3) precursors. Specifically, desaturates dihomo-gamma-linoleoate (DGLA) (20:3n-6) and eicosatetraenoate (ETA) (20:4n-3) to generate arachidonate (AA) (20:4n-6) and eicosapentaenoate (EPA) (20:5n-3), respectively. As a rate limiting enzyme for DGLA (20:3n-6) and AA (20:4n-6)-derived eicosanoid biosynthesis, controls the metabolism of inflammatory lipids like prostaglandin E2, critical for efficient acute inflammatory response and maintenance of epithelium homeostasis. Contributes to membrane phospholipid biosynthesis by providing AA (20:4n-6) as a major acyl chain esterified into phospholipids. In particular, regulates phosphatidylinositol-4,5-bisphosphate levels, modulating inflammatory cytokine production in T-cells. Also desaturates (11E)-octadecenoate (trans-vaccenoate)(18:1n-9), a metabolite in the biohydrogenation pathway of LA (18:2n-6). The sequence is that of Acyl-CoA (8-3)-desaturase from Mus musculus (Mouse).